We begin with the raw amino-acid sequence, 332 residues long: MSPTSDFVNTTSTAKGHEIIAGLTAKPVEGSTITLCKDIIREFFDKVQVPSPNFTRDPELEARVADIVRTWGNEEHLRPYVVTSLILTVTAYSHIANFETRVQITLFTIIIIAMDDPVVFDSLATREFHQRMCTGVIQDEAGMLGAFTKILESMWDHYSGFSANTIYASALRFVNASIIENETDVTTLRSHALPFVEYKRSMTATTEAYACFIWDKARFPDVKVYMQAIPDAMLYVSYVNDILSFYKEELAGETANYIHERAYVTGKSIPDTLRNLINETASAVERVRDILGEGEARAAFENFAAGYIRVHTGNPRYHLKDVIGGDYIIDRV.

5 residues coordinate Mg(2+): D115, E180, N240, S244, and E248. The short motif at 115-121 (DDPVVFD) is the DDXXXXD motif element. Residues 240 to 248 (NDILSFYKE) carry the NSE/DTE motif motif.

Belongs to the trichodiene synthase family. The cofactor is Mg(2+).

Terpene cyclase that catalyzes the cyclization of geranyl diphosphate (GPP) to myrcene and linalool. This chain is Monoterpene synthase 25, found in Postia placenta (strain ATCC 44394 / Madison 698-R) (Brown rot fungus).